The primary structure comprises 506 residues: MGTYPAFSGSLQLPEQRLHGTSNLHPAGGYRIELQVQDATFDKYPAKQHAQRVAAKLKKEKGLIFLMGQKAALLEDSDQETRFRQRRYFFYMSGVNEADCDLTYDIQSDKLTLYVPNFDLRREIWMGPTLGPEEALKRFDIDEAKYQSFLEGDIKQWASCSGHGSTIYILHGSQKPTGDFPNVLMDSETLKPAMNACRVVKDEHEIELMRHANRVSSAAHIAVLQGIRKMTNEAQIEGSFLNTCVSLGAHNQAYGIIAASGANAATLHYSKNNEPLKGRQFVCLDAGAEWDCYASDVTRTFPTAARWPGTEAEQIYALVQNMQESCILRIKEGVRYLDLHYLAHDILIHGFLAIGIFKAGRAEEIKKSGASSLFFPHGLGHHIGLEVHDVSPDSLFAQDNDRTTDSWLFSSTYLSPCTASSPTLKSGMVVTVEPGIYFSQIALDNAKSEQLKHIDMDVVKRYMAVGGVRIEDDILVTKDGFENLTLAPKGQAMLDYIQQGNGSCNI.

Mn(2+) contacts are provided by D285, D296, E433, and E471.

Belongs to the peptidase M24B family. Mn(2+) serves as cofactor.

It carries out the reaction Release of any N-terminal amino acid, including proline, that is linked to proline, even from a dipeptide or tripeptide.. In terms of biological role, catalyzes the removal of a penultimate prolyl residue from the N-termini of peptides. This is Probable Xaa-Pro aminopeptidase PAAG_05466 from Paracoccidioides lutzii (strain ATCC MYA-826 / Pb01) (Paracoccidioides brasiliensis).